The following is a 318-amino-acid chain: L-lactate dehydrogenase (318 aa).

NAD(+) contacts are provided by residues Val-18, Asp-39, Lys-44, Tyr-69, and 83–84 (GA). Residues Gln-86 and Arg-92 each coordinate substrate. Residues Ser-105, 122–124 (VSN), and Ser-147 contribute to the NAD(+) site. Residue 124–127 (NPVD) participates in substrate binding. 152 to 155 (DTSR) provides a ligand contact to substrate. Residue His-179 is the Proton acceptor of the active site. Tyr-225 is subject to Phosphotyrosine. Position 234 (Thr-234) interacts with substrate.

The protein belongs to the LDH/MDH superfamily. LDH family. In terms of assembly, homotetramer.

It is found in the cytoplasm. It catalyses the reaction (S)-lactate + NAD(+) = pyruvate + NADH + H(+). Its pathway is fermentation; pyruvate fermentation to lactate; (S)-lactate from pyruvate: step 1/1. Its function is as follows. Catalyzes the conversion of lactate to pyruvate. The polypeptide is L-lactate dehydrogenase (Clostridium botulinum (strain Loch Maree / Type A3)).